A 210-amino-acid chain; its full sequence is Thymidylate kinase (210 aa).

An ATP-binding site is contributed by 11–18 (GLEGAGKS).

The protein belongs to the thymidylate kinase family.

It catalyses the reaction dTMP + ATP = dTDP + ADP. Functionally, phosphorylation of dTMP to form dTDP in both de novo and salvage pathways of dTTP synthesis. This Vibrio parahaemolyticus serotype O3:K6 (strain RIMD 2210633) protein is Thymidylate kinase.